Reading from the N-terminus, the 205-residue chain is V-type ATP synthase subunit E (205 aa).

The protein belongs to the V-ATPase E subunit family.

Functionally, produces ATP from ADP in the presence of a proton gradient across the membrane. In Treponema denticola (strain ATCC 35405 / DSM 14222 / CIP 103919 / JCM 8153 / KCTC 15104), this protein is V-type ATP synthase subunit E.